An 89-amino-acid chain; its full sequence is Small ribosomal subunit protein uS15 (89 aa).

Belongs to the universal ribosomal protein uS15 family. Part of the 30S ribosomal subunit. Forms a bridge to the 50S subunit in the 70S ribosome, contacting the 23S rRNA.

One of the primary rRNA binding proteins, it binds directly to 16S rRNA where it helps nucleate assembly of the platform of the 30S subunit by binding and bridging several RNA helices of the 16S rRNA. In terms of biological role, forms an intersubunit bridge (bridge B4) with the 23S rRNA of the 50S subunit in the ribosome. This chain is Small ribosomal subunit protein uS15, found in Nitratidesulfovibrio vulgaris (strain DSM 19637 / Miyazaki F) (Desulfovibrio vulgaris).